The following is a 6995-amino-acid chain: Fibrous sheath-interacting protein 2 (6995 aa).

Disordered stretches follow at residues 273–292, 308–336, and 351–476; these read EQKIEEQRRKSREESDRKKQ, DTGLKDDIGRNGFDYRGQNGTTFESSSKK, and GDQK…TDAP. Positions 359–396 are enriched in polar residues; sequence TSGQVSATVNQSQSSSKDVTKVSASSVTYPAEVQNSSS. Basic and acidic residues predominate over residues 397–421; it reads EQKRSEVTKRLSDERGKNSTDDSAR. Positions 424–442 are enriched in polar residues; that stretch reads IISTQLSPTRNAKLSQISL. Serine 430 is subject to Phosphoserine. Residues 443 to 452 are compositionally biased toward basic and acidic residues; the sequence is DHQKEEKEMK. The span at 453 to 463 shows a compositional bias: polar residues; that stretch reads STWNGGLSKKS. Residues 665–692 are a coiled coil; it reads LEISLLYDKKAKAMDQIKNLKNVFVNFK. Disordered regions lie at residues 1452–1472, 2554–2595, 2699–2731, 3182–3270, 5489–5665, 5719–5740, 5823–5878, 5943–5996, and 6973–6995; these read PDPQPSCSHQNTETIDKDPPT, KSKR…VPQM, TKTKIKNKLSAGEKTPRESRSKTALGLPQTPQV, PVKM…PNFT, GPSA…KYKG, SKSSVKTDDRPMSKDKETMTEK, KDLS…SKSK, KEDE…PDKL, and SKVFSRSSGSIPKSSSPPHQDKR. Over residues 2555 to 2565 the composition is skewed to basic and acidic residues; the sequence is SKREGEMHDSS. Over residues 3187–3204 the composition is skewed to polar residues; sequence PSNTSDTPRTRRSSQGSV. Low complexity predominate over residues 3220 to 3231; it reads SVTSNSSSHISS. Over residues 3232 to 3250 the composition is skewed to polar residues; it reads CVENTNKSLEPMGRSNSEA. A compositionally biased stretch (basic residues) spans 3255–3265; sequence SRHKAHDHGQR. Over residues 5496–5509 the composition is skewed to basic and acidic residues; that stretch reads DAKKEDESKVKPAT. 3 stretches are compositionally biased toward polar residues: residues 5523–5557, 5565–5625, and 5638–5650; these read MKSQGSQVQQLATSPPTSMKSQRIQVQQSVMSPPT, QVQQ…QSAM, and VQESSTSPPTTMK. Composition is skewed to basic and acidic residues over residues 5719 to 5738 and 5829 to 5877; these read SKSSVKTDDRPMSKDKETMT and GHRD…ESKS. Residues 5982 to 5993 show a composition bias toward polar residues; it reads SDVQKTPEQSSP. Residues 6977–6995 are compositionally biased toward low complexity; the sequence is SRSSGSIPKSSSPPHQDKR.

In terms of assembly, may interact with AKAP4. As to expression, predominantly expressed in testis.

In terms of biological role, plays a role in spermatogenesis. The sequence is that of Fibrous sheath-interacting protein 2 (Fsip2) from Mus musculus (Mouse).